A 154-amino-acid polypeptide reads, in one-letter code: Ribonuclease H (154 aa).

One can recognise an RNase H type-1 domain in the interval 1-142; that stretch reads MTKHVEIFTD…CDELARTAAE (142 aa). Residues aspartate 10, glutamate 48, aspartate 70, and aspartate 134 each coordinate Mg(2+).

This sequence belongs to the RNase H family. As to quaternary structure, monomer. Requires Mg(2+) as cofactor.

It localises to the cytoplasm. It catalyses the reaction Endonucleolytic cleavage to 5'-phosphomonoester.. Functionally, endonuclease that specifically degrades the RNA of RNA-DNA hybrids. The polypeptide is Ribonuclease H (Vibrio campbellii (strain ATCC BAA-1116)).